Here is a 70-residue protein sequence, read N- to C-terminus: Small ribosomal subunit protein bS21 (70 aa).

The protein belongs to the bacterial ribosomal protein bS21 family.

This Nitrosospira multiformis (strain ATCC 25196 / NCIMB 11849 / C 71) protein is Small ribosomal subunit protein bS21.